We begin with the raw amino-acid sequence, 156 residues long: Aspartate 1-decarboxylase (156 aa).

Ser-29 functions as the Schiff-base intermediate with substrate; via pyruvic acid in the catalytic mechanism. Ser-29 bears the Pyruvic acid (Ser) mark. Residue Thr-61 coordinates substrate. Tyr-62 acts as the Proton donor in catalysis. 77–79 (GAA) contacts substrate.

This sequence belongs to the PanD family. Heterooctamer of four alpha and four beta subunits. Pyruvate serves as cofactor. Post-translationally, is synthesized initially as an inactive proenzyme, which is activated by self-cleavage at a specific serine bond to produce a beta-subunit with a hydroxyl group at its C-terminus and an alpha-subunit with a pyruvoyl group at its N-terminus.

It localises to the cytoplasm. It carries out the reaction L-aspartate + H(+) = beta-alanine + CO2. The protein operates within cofactor biosynthesis; (R)-pantothenate biosynthesis; beta-alanine from L-aspartate: step 1/1. In terms of biological role, catalyzes the pyruvoyl-dependent decarboxylation of aspartate to produce beta-alanine. This Rhodopirellula baltica (strain DSM 10527 / NCIMB 13988 / SH1) protein is Aspartate 1-decarboxylase.